The sequence spans 612 residues: Dihydroxy-acid dehydratase (612 aa).

D81 provides a ligand contact to Mg(2+). Position 122 (C122) interacts with [2Fe-2S] cluster. Mg(2+) contacts are provided by D123 and K124. K124 is subject to N6-carboxylysine. [2Fe-2S] cluster is bound at residue C195. E492 lines the Mg(2+) pocket. S518 serves as the catalytic Proton acceptor.

This sequence belongs to the IlvD/Edd family. In terms of assembly, homodimer. [2Fe-2S] cluster is required as a cofactor. Requires Mg(2+) as cofactor.

It catalyses the reaction (2R)-2,3-dihydroxy-3-methylbutanoate = 3-methyl-2-oxobutanoate + H2O. It carries out the reaction (2R,3R)-2,3-dihydroxy-3-methylpentanoate = (S)-3-methyl-2-oxopentanoate + H2O. It participates in amino-acid biosynthesis; L-isoleucine biosynthesis; L-isoleucine from 2-oxobutanoate: step 3/4. It functions in the pathway amino-acid biosynthesis; L-valine biosynthesis; L-valine from pyruvate: step 3/4. In terms of biological role, functions in the biosynthesis of branched-chain amino acids. Catalyzes the dehydration of (2R,3R)-2,3-dihydroxy-3-methylpentanoate (2,3-dihydroxy-3-methylvalerate) into 2-oxo-3-methylpentanoate (2-oxo-3-methylvalerate) and of (2R)-2,3-dihydroxy-3-methylbutanoate (2,3-dihydroxyisovalerate) into 2-oxo-3-methylbutanoate (2-oxoisovalerate), the penultimate precursor to L-isoleucine and L-valine, respectively. This chain is Dihydroxy-acid dehydratase, found in Kocuria rhizophila (strain ATCC 9341 / DSM 348 / NBRC 103217 / DC2201).